The primary structure comprises 832 residues: Thymine dioxygenase JBP1-A (832 aa).

Basic and acidic residues predominate over residues 1–12; it reads MKQKRGKQDVKM. Residues 1-24 are disordered; sequence MKQKRGKQDVKMLESAPPQLLPKK. The interval 80–282 is thymine dioxygenase; the sequence is VVGGVFLPGA…RLTCVCYYRA (203 aa). H207, D209, and H257 together coordinate Fe cation. R273 contacts 2-oxoglutarate. Residues 409–578 are DNA-binding JBP1 domain; that stretch reads LGGALKAAEE…IEEARRRGSS (170 aa).

Belongs to the TET family. JBP1 subfamily. As to quaternary structure, monomer. Binds to DNA as a monomer. It depends on Fe(2+) as a cofactor.

It localises to the nucleus. The enzyme catalyses thymine + 2-oxoglutarate + O2 = 5-hydroxymethyluracil + succinate + CO2. In terms of biological role, dioxygenase that catalyzes the first step of DNA base J (beta-d-glucosyl-HOMedU) biosynthesis by converting thymine to 5-hydroxymethyluracil (HOMedU). DNA base J is a hypermodified thymidine residue found in the genome of kinetoplastid parasites, which is localized primarily to repetitive DNA, namely the telomeres, and is implicated in the regulation of antigenic variation. Also specifically binds to base J-containing DNA (J-DNA). Involved in propagation and maintenance of DNA base J synthesis initiated by JBP2 by specifically binding already synthesized DNA base J and propagating J synthesis. Thymine dioxygenase activity and J-DNA-binding are independent functions. This Trypanosoma cruzi (strain CL Brener) protein is Thymine dioxygenase JBP1-A (JBP1A).